A 235-amino-acid polypeptide reads, in one-letter code: Elongation factor Tu (235 aa).

Residues 1-125 (KNMITGAAQM…EVDEYIPTPE (125 aa)) form the tr-type G domain. 47 to 50 (NKED) provides a ligand contact to GTP.

Belongs to the TRAFAC class translation factor GTPase superfamily. Classic translation factor GTPase family. EF-Tu/EF-1A subfamily. In terms of assembly, monomer.

The protein localises to the cytoplasm. It catalyses the reaction GTP + H2O = GDP + phosphate + H(+). GTP hydrolase that promotes the GTP-dependent binding of aminoacyl-tRNA to the A-site of ribosomes during protein biosynthesis. The polypeptide is Elongation factor Tu (tufA) (Gloeothece membranacea (strain PCC 6501 / SAG 26.84)).